The following is a 499-amino-acid chain: MKIQVMKDQIKEIMADAIVIGIYEGTKSLNDNLKSMDLQLDGIITEMISSEAFKGKEGETLVIYSLGRIPAKKIMLLGLGKETDLKEDTIRRLTAKVVREAEAMKAKVVAMTAIGLDRGIAPELVGQCMMEGADLAAYKFDKYKTTDRNSGEGVQELYLLNEEESINKDLEKGFQTGAKLAQGTIIARNLVNEPSNVLTPTAMADKAIEIANNHGLEISILEKEDMEKLGMGSFLGVTKGSEEPPKLIAIKYFGNKEDEEIIGLVGKGLTFDSGGISLKPGAGMDAMKSDMGGAAAVLGAMDVIGALKPKVNVIAIVGACENMPSGKAYKPGDILTSMNGKTIEILNTDAEGRLVLIDCITYALKQGATRIVDLATLTGACIVALGHVTTALVSNDDDFVQQMYLAAERAGEKVWQLPSFPEYKELIKSDIADLKNVGDKGAGTITAGLFLGEFVEGRPWIHMDIAGTAMALGTKGYYAKGGSGVGVRTLYHLVKSMEK.

Lys267 and Asp272 together coordinate Mn(2+). The active site involves Lys279. Residues Asp290, Asp349, and Glu351 each coordinate Mn(2+). The active site involves Arg353.

The protein belongs to the peptidase M17 family. Requires Mn(2+) as cofactor.

Its subcellular location is the cytoplasm. It catalyses the reaction Release of an N-terminal amino acid, Xaa-|-Yaa-, in which Xaa is preferably Leu, but may be other amino acids including Pro although not Arg or Lys, and Yaa may be Pro. Amino acid amides and methyl esters are also readily hydrolyzed, but rates on arylamides are exceedingly low.. The enzyme catalyses Release of an N-terminal amino acid, preferentially leucine, but not glutamic or aspartic acids.. Presumably involved in the processing and regular turnover of intracellular proteins. Catalyzes the removal of unsubstituted N-terminal amino acids from various peptides. This chain is Probable cytosol aminopeptidase, found in Alkaliphilus oremlandii (strain OhILAs) (Clostridium oremlandii (strain OhILAs)).